The chain runs to 490 residues: MEPFVVLVLCLSFMLLFSLWRQSCRRRKLPPGPTPLPIIGNMLQIDVKDICKSFTNFSKVYGPVFTVYFGMNPIVVFHGYEAVKEALIDNGEEFSGRGNSPISQRITKGLGIISSNGKRWKEIRRFSLTTLRNFGMGKRSIEDRVQEEAHCLVEELRKTKASPCDPTFILGCAPCNVICSVVFQKRFDYKDQNFLTLMKRFNENFRILNSPWIQVCNNFPLLIDCFPGTHNKVLKNVALTRSYIREKVKEHQASLDVNNPRDFIDCFLIKMEQEKDNQKSEFNIENLVGTVADLFVAGTETTSTTLRYGLLLLLKHPEVTAKVQEEIDHVIGRHRSPCMQDRSHMPYTDAVVHEIQRYSDLVPTGVPHAVTTDTKFRNYLIPKGTTIMALLTSVLHDDKEFPNPNIFDPGHFLDKNGNFKKSDYFMPFSAGKRICAGEGLARMELFLFLTTILQNFNLKSVDDLKNLNTTAVTKGIVSLPPSYQICFIPV.

Substrate contacts are provided by Ser-100, Asn-204, and Arg-241. Ser-100 carries the phosphoserine modification. Residue Cys-435 coordinates heme.

This sequence belongs to the cytochrome P450 family. Heme is required as a cofactor.

The protein localises to the endoplasmic reticulum membrane. It is found in the microsome membrane. It catalyses the reaction an organic molecule + reduced [NADPH--hemoprotein reductase] + O2 = an alcohol + oxidized [NADPH--hemoprotein reductase] + H2O + H(+). It carries out the reaction (5Z,8Z,11Z,14Z)-eicosatetraenoate + reduced [NADPH--hemoprotein reductase] + O2 = (11R,12S)-epoxy-(5Z,8Z,14Z)-eicosatrienoate + oxidized [NADPH--hemoprotein reductase] + H2O + H(+). The catalysed reaction is (5Z,8Z,11Z,14Z)-eicosatetraenoate + reduced [NADPH--hemoprotein reductase] + O2 = (11S,12R)-epoxy-(5Z,8Z,14Z)-eicosatrienoate + oxidized [NADPH--hemoprotein reductase] + H2O + H(+). The enzyme catalyses (5Z,8Z,11Z,14Z)-eicosatetraenoate + reduced [NADPH--hemoprotein reductase] + O2 = (14R,15S)-epoxy-(5Z,8Z,11Z)-eicosatrienoate + oxidized [NADPH--hemoprotein reductase] + H2O + H(+). It catalyses the reaction (5Z,8Z,11Z,14Z)-eicosatetraenoate + reduced [NADPH--hemoprotein reductase] + O2 = (14S,15R)-epoxy-(5Z,8Z,11Z)-eicosatrienoate + oxidized [NADPH--hemoprotein reductase] + H2O + H(+). It carries out the reaction (5Z,8Z,11Z,14Z,17Z)-eicosapentaenoate + reduced [NADPH--hemoprotein reductase] + O2 = 11,12-epoxy-(5Z,8Z,14Z,17Z)-eicosatetraenoate + oxidized [NADPH--hemoprotein reductase] + H2O + H(+). The catalysed reaction is (5Z,8Z,11Z,14Z,17Z)-eicosapentaenoate + reduced [NADPH--hemoprotein reductase] + O2 = 14,15-epoxy-(5Z,8Z,11Z,17Z)-eicosatetraenoate + oxidized [NADPH--hemoprotein reductase] + H2O + H(+). The enzyme catalyses (5Z,8Z,11Z,14Z,17Z)-eicosapentaenoate + reduced [NADPH--hemoprotein reductase] + O2 = (17R,18S)-epoxy-(5Z,8Z,11Z,14Z)-eicosatetraenoate + oxidized [NADPH--hemoprotein reductase] + H2O + H(+). It catalyses the reaction (5Z,8Z,11Z,14Z,17Z)-eicosapentaenoate + reduced [NADPH--hemoprotein reductase] + O2 = (17S,18R)-epoxy-(5Z,8Z,11Z,14Z)-eicosatetraenoate + oxidized [NADPH--hemoprotein reductase] + H2O + H(+). It carries out the reaction (4Z,7Z,10Z,13Z,16Z,19Z)-docosahexaenoate + reduced [NADPH--hemoprotein reductase] + O2 = (19R,20S)-epoxy-(4Z,7Z,10Z,13Z,16Z)-docosapentaenoate + oxidized [NADPH--hemoprotein reductase] + H2O + H(+). The catalysed reaction is (4Z,7Z,10Z,13Z,16Z,19Z)-docosahexaenoate + reduced [NADPH--hemoprotein reductase] + O2 = (19S,20R)-epoxy-(4Z,7Z,10Z,13Z,16Z)-docosapentaenoate + oxidized [NADPH--hemoprotein reductase] + H2O + H(+). The enzyme catalyses all-trans-retinoate + reduced [NADPH--hemoprotein reductase] + O2 = all-trans-4-hydroxyretinoate + oxidized [NADPH--hemoprotein reductase] + H2O + H(+). It catalyses the reaction 17beta-estradiol + reduced [NADPH--hemoprotein reductase] + O2 = 16alpha,17beta-estriol + oxidized [NADPH--hemoprotein reductase] + H2O + H(+). It carries out the reaction estrone + reduced [NADPH--hemoprotein reductase] + O2 = 16alpha-hydroxyestrone + oxidized [NADPH--hemoprotein reductase] + H2O + H(+). It functions in the pathway steroid metabolism. The protein operates within lipid metabolism; arachidonate metabolism. Its pathway is cofactor metabolism; retinol metabolism. A cytochrome P450 monooxygenase involved in the metabolism of various endogenous substrates, including fatty acids, steroid hormones and vitamins. Mechanistically, uses molecular oxygen inserting one oxygen atom into a substrate, and reducing the second into a water molecule, with two electrons provided by NADPH via cytochrome P450 reductase (NADPH--hemoprotein reductase). Primarily catalyzes the epoxidation of double bonds of polyunsaturated fatty acids (PUFA) with a preference for the last double bond. Catalyzes the hydroxylation of carbon-hydrogen bonds. Metabolizes all trans-retinoic acid toward its 4-hydroxylated form. Displays 16-alpha hydroxylase activity toward estrogen steroid hormones, 17beta-estradiol (E2) and estrone (E1). Plays a role in the oxidative metabolism of xenobiotics. It is the principal enzyme responsible for the metabolism of the anti-cancer drug paclitaxel (taxol). The chain is Cytochrome P450 2C8 from Homo sapiens (Human).